We begin with the raw amino-acid sequence, 347 residues long: Guanine nucleotide-binding protein subunit beta (347 aa).

WD repeat units lie at residues 60–90 (GHLAKIYAMHWAEDNVHLVSASQDGKLLVWD), 102–132 (LRSSWVMTCAYSPTANFVACGGLDNICSIYN), 148–177 (SHTGYLSCCRFLNDRQIVTSSGDMTCILWD), 189–219 (DHNGDVMSVSVSPDKNYFISGACDATAKLWD), 231–261 (GHEADINAVQYFPNGLSFGTGSDDASCRLFD), 275–305 (NILCGITSVGFSFSGRFLFAGYDDFTCNVWD), and 317–347 (GHGNRVSCLGVPTDGMALCTGSWDSLLKIWA).

It belongs to the WD repeat G protein beta family. As to quaternary structure, g proteins are composed of 3 units, alpha, beta and gamma. Interacts with gpgA, and this requires phlp1.

The protein resides in the cytoplasm. Its subcellular location is the cell membrane. Guanine nucleotide-binding proteins (G proteins) are involved as a modulator or transducer in various transmembrane signaling systems. The beta and gamma chains are required for the GTPase activity, for replacement of GDP by GTP, and for G protein-effector interaction. Required for normal chemotaxis in response to cAMP and for aggregation during scorocarp development. In Dictyostelium discoideum (Social amoeba), this protein is Guanine nucleotide-binding protein subunit beta (gpbA).